The sequence spans 82 residues: uncharacterized protein (82 aa).

Functionally, could be a silencing control element for the regulation of the restriction system. This is an uncharacterized protein from Herpetosiphon aurantiacus (Herpetosiphon giganteus).